The sequence spans 143 residues: Hemoglobin subunit alpha (143 aa).

One can recognise a Globin domain in the interval 2–143; the sequence is VLSPADKTNV…VSTVLVSKYR (142 aa). Serine 4 bears the Phosphoserine mark. At lysine 8 the chain carries N6-succinyllysine. A Phosphothreonine modification is found at threonine 9. At lysine 12 the chain carries N6-succinyllysine. At lysine 17 the chain carries N6-acetyllysine; alternate. Lysine 17 carries the N6-succinyllysine; alternate modification. The residue at position 25 (tyrosine 25) is a Phosphotyrosine. Serine 36 is subject to Phosphoserine. An N6-succinyllysine modification is found at lysine 41. Phosphoserine is present on serine 51. Histidine 60 provides a ligand contact to O2. Histidine 89 contacts heme b. Residue serine 104 is modified to Phosphoserine. At threonine 110 the chain carries Phosphothreonine. A Phosphoserine modification is found at serine 126. Threonine 136 carries the post-translational modification Phosphothreonine. A Phosphoserine modification is found at serine 140.

Belongs to the globin family. Heterotetramer of two alpha chains and two beta chains. Red blood cells.

Involved in oxygen transport from the lung to the various peripheral tissues. Its function is as follows. Hemopressin acts as an antagonist peptide of the cannabinoid receptor CNR1. Hemopressin-binding efficiently blocks cannabinoid receptor CNR1 and subsequent signaling. The polypeptide is Hemoglobin subunit alpha (HBA) (Pipistrellus abramus (Japanese pipistrelle)).